Here is an 87-residue protein sequence, read N- to C-terminus: Toxin Cll4 (87 aa).

The signal sequence occupies residues 1 to 19; the sequence is MNSLLMITACLALIGTVWA. The region spanning 20-85 is the LCN-type CS-alpha/beta domain; that stretch reads KEGYIVNYHD…VWPLPKKRCN (66 aa). Intrachain disulfides connect Cys31/Cys84, Cys35/Cys60, Cys44/Cys65, and Cys48/Cys67. Asn85 carries the post-translational modification Asparagine amide.

This sequence belongs to the long (4 C-C) scorpion toxin superfamily. Sodium channel inhibitor family. Beta subfamily. In terms of tissue distribution, expressed by the venom gland.

It localises to the secreted. In terms of biological role, beta toxins bind voltage-independently at site-4 of sodium channels (Nav) and shift the voltage of activation toward more negative potentials thereby affecting sodium channel activation and promoting spontaneous and repetitive firing. The protein is Toxin Cll4 of Centruroides limpidus (Mexican scorpion).